A 511-amino-acid polypeptide reads, in one-letter code: Bifunctional purine biosynthesis protein PurH (511 aa).

The MGS-like domain maps to 1-145 (MKKRALVSVS…KNHKFVSVIV (145 aa)).

Belongs to the PurH family.

The catalysed reaction is (6R)-10-formyltetrahydrofolate + 5-amino-1-(5-phospho-beta-D-ribosyl)imidazole-4-carboxamide = 5-formamido-1-(5-phospho-D-ribosyl)imidazole-4-carboxamide + (6S)-5,6,7,8-tetrahydrofolate. The enzyme catalyses IMP + H2O = 5-formamido-1-(5-phospho-D-ribosyl)imidazole-4-carboxamide. Its pathway is purine metabolism; IMP biosynthesis via de novo pathway; 5-formamido-1-(5-phospho-D-ribosyl)imidazole-4-carboxamide from 5-amino-1-(5-phospho-D-ribosyl)imidazole-4-carboxamide (10-formyl THF route): step 1/1. It functions in the pathway purine metabolism; IMP biosynthesis via de novo pathway; IMP from 5-formamido-1-(5-phospho-D-ribosyl)imidazole-4-carboxamide: step 1/1. The protein is Bifunctional purine biosynthesis protein PurH of Bacillus cytotoxicus (strain DSM 22905 / CIP 110041 / 391-98 / NVH 391-98).